A 321-amino-acid polypeptide reads, in one-letter code: Replication factor C small subunit (321 aa).

46–53 (GPAGVGKT) contributes to the ATP binding site.

Belongs to the activator 1 small subunits family. RfcS subfamily. As to quaternary structure, heterohexamer composed of four small subunits (RfcS) and two large subunits (RfcL).

Its function is as follows. Part of the RFC clamp loader complex which loads the PCNA sliding clamp onto DNA. The complex possesses DNA-dependent ATPase activity which is further stimulated by PCNA. In conjunction with PCNA stimulates DNA synthesis by PolB, relieving inhibition by replication protein A (RPA). In Methanothermobacter thermautotrophicus (strain ATCC 29096 / DSM 1053 / JCM 10044 / NBRC 100330 / Delta H) (Methanobacterium thermoautotrophicum), this protein is Replication factor C small subunit (rfcS).